The primary structure comprises 501 residues: Cystine/glutamate transporter (501 aa).

Residues 1 to 43 (MVRKPVVSTISKGGYLQGNVNGRLPSLGNKEPPGQEKVQLKRK) are Cytoplasmic-facing. Residue Ser-26 is modified to Phosphoserine. A helical membrane pass occupies residues 44 to 64 (VTLLRGVSIIIGTIIGAGIFI). Residues 65–74 (SPKGVLQNTG) lie on the Extracellular side of the membrane. A helical transmembrane segment spans residues 75-95 (SVGMSLTIWTVCGVLSLFGAL). Topologically, residues 96 to 101 (SYAELG) are cytoplasmic. The stretch at 102–116 (TTIKKSGGHYTYILE) is an intramembrane region. Topologically, residues 117–130 (VFGPLPAFVRVWVE) are cytoplasmic. The chain crosses the membrane as a helical span at residues 131–150 (LLIIRPAATAVISLAFGRYI). An L-glutamate-binding site is contributed by Arg-135. Over 151-163 (LEPFFIQCEIPEL) the chain is Extracellular. A helical transmembrane segment spans residues 164 to 179 (AIKLITAVGITVVMVL). The Cytoplasmic segment spans residues 180 to 193 (NSMSVSWSARIQIF). The chain crosses the membrane as a helical span at residues 194–210 (LTFCKLTAILIIIVPGV). Topologically, residues 211–234 (MQLIKGQTQNFKDAFSGRDSSITR) are extracellular. The chain crosses the membrane as a helical span at residues 235 to 255 (LPLAFYYGMYAYAGWFYLNFV). An L-glutamate-binding site is contributed by Tyr-244. Over 256–265 (TEEVENPEKT) the chain is Cytoplasmic. The helical transmembrane segment at 266–286 (IPLAICISMAIVTIGYVLTNV) threads the bilayer. The Extracellular segment spans residues 287 to 317 (AYFTTINAEELLLSNAVAVTFSERLLGNFSL). N-linked (GlcNAc...) asparagine glycosylation occurs at Asn-314. A helical membrane pass occupies residues 318–338 (AVPIFVALSCFGSMNGGVFAV). Residues 339-364 (SRLFYVASREGHLPEILSMIHVRKHT) are Cytoplasmic-facing. The helical transmembrane segment at 365–385 (PLPAVIVLHPLTMIMLFSGDL) threads the bilayer. At 386 to 387 (DS) the chain is on the extracellular side. A helical transmembrane segment spans residues 388–408 (LLNFLSFARWLFIGLAVAGLI). The Cytoplasmic portion of the chain corresponds to 409–422 (YLRYKCPDMHRPFK). A helical transmembrane segment spans residues 423–443 (VPLFIPALFSFTCLFMVALSL). Residues 444-449 (YSDPFS) lie on the Extracellular side of the membrane. A helical membrane pass occupies residues 450-470 (TGIGSVITLTGVPAYYLFIIW). Over 471-501 (DKKPRWFRIMSEKITRTLQIILEVVPEEDKL) the chain is Cytoplasmic.

Belongs to the amino acid-polyamine-organocation (APC) superfamily. L-type amino acid transporter (LAT) (TC 2.A.3.8) family. As to quaternary structure, disulfide-linked heterodimer with the amino acid transport protein SLC3A2/4F2hc; this interaction mediates cell membrane localization.

It localises to the cell membrane. Its subcellular location is the cell projection. The protein localises to the microvillus membrane. The catalysed reaction is L-cystine(out) + L-glutamate(in) = L-cystine(in) + L-glutamate(out). It carries out the reaction an L-alpha-amino acid(in) + L-kynurenine(out) = an L-alpha-amino acid(out) + L-kynurenine(in). The enzyme catalyses N-acetyl-L-cysteine(out) + L-glutamate(in) = N-acetyl-L-cysteine(in) + L-glutamate(out). In terms of biological role, heterodimer with SLC3A2, that functions as an antiporter by mediating the exchange of extracellular anionic L-cystine and intracellular L-glutamate across the cellular plasma membrane. Provides L-cystine for the maintenance of the redox balance between extracellular L-cystine and L-cysteine and for the maintenance of the intracellular levels of glutathione that is essential for cells protection from oxidative stress. The transport is sodium-independent, electroneutral with a stoichiometry of 1:1, and is drove by the high intracellular concentration of L-glutamate and the intracellular reduction of L-cystine. In addition, mediates the import of L-kynurenine leading to anti-ferroptotic signaling propagation required to maintain L-cystine and glutathione homeostasis. Moreover, mediates N-acetyl-L-cysteine uptake into the placenta leading to subsequently down-regulation of pathways associated with oxidative stress, inflammation and apoptosis. In vitro can also transport L-aspartate. May participate in astrocyte and meningeal cell proliferation during development and can provide neuroprotection by promoting glutathione synthesis and delivery from non-neuronal cells such as astrocytes and meningeal cells to immature neurons. Controls the production of pheomelanin pigment directly. The chain is Cystine/glutamate transporter from Pongo abelii (Sumatran orangutan).